The chain runs to 545 residues: MAKRIIYNEQARRALERGIDILAESVAVTLGPKGRNVVLEKKFGAPQIINDGVTIAKEIELEDHIENTGVALIRQAASKTNDAAGDGTTTATVLAHAMVKAGLRNVAAGANAITLKKGIDKATEFLVGKIQENSKPISDSNAIAQCGTIAAGNDDEVGQMIANAMDKVGKEGVISLEEGKSMTTELEVTEGMRFDKGYISPYFATDTERMEAVLDEPYILLTDKKIALVQDLVPVLEQIAKTGKPLVIIAEDIEKEALATLVVNRLRGVLNVAAVKAPGFGDRRKAMLEDMAVLTNGQLITEDAGLKLENATLDMLGTGRRITINKETTTIVAEGNEQAVKARCDQIKKQMDETDSSYDKEKLQERLAKLAGGVAVIKVGAATETEMKDKKLRLEDAINATKAAVEEGIVPGGGTTLAHLSPILKEWADKNLEGEELIGANIVEASLTAPLMRIAENAGSNGAVIAENVKTKPFNDGFNAATGEYVDMSSAGIVDPAKVTRSGLQNAASIAGMVLTTECIVADLPEKKDSAAPAGAPGMGGDFDY.

ATP contacts are provided by residues 29–32 (TLGP), 86–90 (DGTTT), Gly413, 479–481 (NAA), and Asp495.

The protein belongs to the chaperonin (HSP60) family. Forms a cylinder of 14 subunits composed of two heptameric rings stacked back-to-back. Interacts with the co-chaperonin GroES.

It localises to the cytoplasm. The enzyme catalyses ATP + H2O + a folded polypeptide = ADP + phosphate + an unfolded polypeptide.. Its function is as follows. Together with its co-chaperonin GroES, plays an essential role in assisting protein folding. The GroEL-GroES system forms a nano-cage that allows encapsulation of the non-native substrate proteins and provides a physical environment optimized to promote and accelerate protein folding. The protein is Chaperonin GroEL 2 of Prochlorococcus marinus (strain MIT 9301).